We begin with the raw amino-acid sequence, 439 residues long: Trigger factor (439 aa).

Positions 162-247 (GDTVTIDYVG…IHEVKAKQLP (86 aa)) constitute a PPIase FKBP-type domain.

Belongs to the FKBP-type PPIase family. Tig subfamily.

Its subcellular location is the cytoplasm. The catalysed reaction is [protein]-peptidylproline (omega=180) = [protein]-peptidylproline (omega=0). Its function is as follows. Involved in protein export. Acts as a chaperone by maintaining the newly synthesized protein in an open conformation. Functions as a peptidyl-prolyl cis-trans isomerase. The sequence is that of Trigger factor from Lactobacillus delbrueckii subsp. bulgaricus (strain ATCC 11842 / DSM 20081 / BCRC 10696 / JCM 1002 / NBRC 13953 / NCIMB 11778 / NCTC 12712 / WDCM 00102 / Lb 14).